The primary structure comprises 354 residues: 3-isopropylmalate dehydrogenase (354 aa).

Substrate-binding residues include Arg96, Arg106, Arg132, and Asp223. Residues Asp223, Asp247, and Asp251 each contribute to the Mg(2+) site. 283–295 (GSAPDIAGQGKAD) contributes to the NAD(+) binding site.

The protein belongs to the isocitrate and isopropylmalate dehydrogenases family. LeuB type 2 subfamily. As to quaternary structure, homodimer. The cofactor is Mg(2+). Requires Mn(2+) as cofactor.

It is found in the cytoplasm. It carries out the reaction (2R,3S)-3-isopropylmalate + NAD(+) = 4-methyl-2-oxopentanoate + CO2 + NADH. The protein operates within amino-acid biosynthesis; L-leucine biosynthesis; L-leucine from 3-methyl-2-oxobutanoate: step 3/4. Functionally, catalyzes the oxidation of 3-carboxy-2-hydroxy-4-methylpentanoate (3-isopropylmalate) to 3-carboxy-4-methyl-2-oxopentanoate. The product decarboxylates to 4-methyl-2 oxopentanoate. The protein is 3-isopropylmalate dehydrogenase of Thermobifida fusca (strain YX).